A 63-amino-acid chain; its full sequence is 2-hydroxymuconate tautomerase (63 aa).

The active-site Proton acceptor; via imino nitrogen is proline 2.

This sequence belongs to the 4-oxalocrotonate tautomerase family. Homohexamer.

It catalyses the reaction (2Z,4E)-2-hydroxyhexa-2,4-dienedioate = (3E)-2-oxohex-3-enedioate. Its pathway is aromatic compound metabolism; salicylate degradation. Its function is as follows. Catalyzes the ketonization of 2-hydroxymuconate stereoselectively to yield 2-oxo-3-hexenedioate. The protein is 2-hydroxymuconate tautomerase (tdnL) of Pseudomonas putida (Arthrobacter siderocapsulatus).